Reading from the N-terminus, the 372-residue chain is Glutamate 5-kinase (372 aa).

Lys14 provides a ligand contact to ATP. Residues Ser54, Asp141, and Asn153 each contribute to the substrate site. Residue 173-174 (TD) coordinates ATP. The region spanning 280–358 (RGTLTLDEGA…DEIEKLLGYV (79 aa)) is the PUA domain.

The protein belongs to the glutamate 5-kinase family.

It is found in the cytoplasm. The enzyme catalyses L-glutamate + ATP = L-glutamyl 5-phosphate + ADP. It participates in amino-acid biosynthesis; L-proline biosynthesis; L-glutamate 5-semialdehyde from L-glutamate: step 1/2. Its function is as follows. Catalyzes the transfer of a phosphate group to glutamate to form L-glutamate 5-phosphate. The polypeptide is Glutamate 5-kinase (Stutzerimonas stutzeri (strain A1501) (Pseudomonas stutzeri)).